Consider the following 183-residue polypeptide: Large ribosomal subunit protein uL13m (183 aa).

This sequence belongs to the universal ribosomal protein uL13 family. As to quaternary structure, component of the mitochondrial large ribosomal subunit (mt-LSU). Mature N.crassa 74S mitochondrial ribosomes consist of a small (37S) and a large (54S) subunit. The 37S small subunit contains a 16S ribosomal RNA (16S mt-rRNA) and 32 different proteins. The 54S large subunit contains a 23S rRNA (23S mt-rRNA) and 42 different proteins.

The protein localises to the mitochondrion. Component of the mitochondrial ribosome (mitoribosome), a dedicated translation machinery responsible for the synthesis of mitochondrial genome-encoded proteins, including at least some of the essential transmembrane subunits of the mitochondrial respiratory chain. The mitoribosomes are attached to the mitochondrial inner membrane and translation products are cotranslationally integrated into the membrane. The polypeptide is Large ribosomal subunit protein uL13m (mrpl23) (Neurospora crassa (strain ATCC 24698 / 74-OR23-1A / CBS 708.71 / DSM 1257 / FGSC 987)).